Consider the following 84-residue polypeptide: Small ribosomal subunit protein uS17 (84 aa).

It belongs to the universal ribosomal protein uS17 family. In terms of assembly, part of the 30S ribosomal subunit.

One of the primary rRNA binding proteins, it binds specifically to the 5'-end of 16S ribosomal RNA. The sequence is that of Small ribosomal subunit protein uS17 from Clostridium botulinum (strain Eklund 17B / Type B).